The following is a 290-amino-acid chain: Signal peptidase I (290 aa).

Residues 1 to 13 are Cytoplasmic-facing; that stretch reads MKFLRSVYAFCSS. Residues 14–34 form a helical membrane-spanning segment; it reads WVGTIVIVLLVIFFIAQAFII. The Extracellular portion of the chain corresponds to 35–290; it reads PSRSMVGTLY…KIIKKENATH (256 aa). Catalysis depends on residues S38 and K106.

It belongs to the peptidase S26 family.

It is found in the cell membrane. It carries out the reaction Cleavage of hydrophobic, N-terminal signal or leader sequences from secreted and periplasmic proteins.. In Helicobacter pylori (strain ATCC 700392 / 26695) (Campylobacter pylori), this protein is Signal peptidase I (lepB).